The sequence spans 218 residues: Eukaryotic translation initiation factor 3 subunit K (218 aa).

The region spanning 44–205 (YDWGANLAVL…NIKTKNITEK (162 aa)) is the PCI domain.

It belongs to the eIF-3 subunit K family. In terms of assembly, component of the eukaryotic translation initiation factor 3 (eIF-3) complex.

Its subcellular location is the cytoplasm. Component of the eukaryotic translation initiation factor 3 (eIF-3) complex, which is involved in protein synthesis of a specialized repertoire of mRNAs and, together with other initiation factors, stimulates binding of mRNA and methionyl-tRNAi to the 40S ribosome. The eIF-3 complex specifically targets and initiates translation of a subset of mRNAs involved in cell proliferation. In Bombyx mori (Silk moth), this protein is Eukaryotic translation initiation factor 3 subunit K.